Here is a 378-residue protein sequence, read N- to C-terminus: Chaperone protein DnaJ (378 aa).

The J domain occupies 4–68; the sequence is DFYEILGVSR…ETRARYDRFG (65 aa). The CR-type zinc finger occupies 136–218; the sequence is GGEKEIRIPH…CGGAGRKQET (83 aa). 8 residues coordinate Zn(2+): C149, C152, C166, C169, C192, C195, C206, and C209. CXXCXGXG motif repeat units lie at residues 149–156, 166–173, 192–199, and 206–213; these read CKTCSGSG, CGTCNGTG, CPTCNGEG, and CESCGGAG.

Belongs to the DnaJ family. In terms of assembly, homodimer. The cofactor is Zn(2+).

The protein localises to the cytoplasm. Its function is as follows. Participates actively in the response to hyperosmotic and heat shock by preventing the aggregation of stress-denatured proteins and by disaggregating proteins, also in an autonomous, DnaK-independent fashion. Unfolded proteins bind initially to DnaJ; upon interaction with the DnaJ-bound protein, DnaK hydrolyzes its bound ATP, resulting in the formation of a stable complex. GrpE releases ADP from DnaK; ATP binding to DnaK triggers the release of the substrate protein, thus completing the reaction cycle. Several rounds of ATP-dependent interactions between DnaJ, DnaK and GrpE are required for fully efficient folding. Also involved, together with DnaK and GrpE, in the DNA replication of plasmids through activation of initiation proteins. In Picosynechococcus sp. (strain ATCC 27264 / PCC 7002 / PR-6) (Agmenellum quadruplicatum), this protein is Chaperone protein DnaJ.